The primary structure comprises 260 residues: Indole-3-glycerol phosphate synthase (260 aa).

This sequence belongs to the TrpC family.

It carries out the reaction 1-(2-carboxyphenylamino)-1-deoxy-D-ribulose 5-phosphate + H(+) = (1S,2R)-1-C-(indol-3-yl)glycerol 3-phosphate + CO2 + H2O. Its pathway is amino-acid biosynthesis; L-tryptophan biosynthesis; L-tryptophan from chorismate: step 4/5. The protein is Indole-3-glycerol phosphate synthase of Koribacter versatilis (strain Ellin345).